The sequence spans 280 residues: Shikimate dehydrogenase (NADP(+)) (280 aa).

Residues 20–22 (SLS) and threonine 67 each bind shikimate. Lysine 71 functions as the Proton acceptor in the catalytic mechanism. Residue glutamate 83 participates in NADP(+) binding. Shikimate is bound by residues asparagine 92 and aspartate 107. Residues 131-135 (GAGGA), 155-160 (NRTLNK), and leucine 224 contribute to the NADP(+) site. Tyrosine 226 is a shikimate binding site. Glycine 247 serves as a coordination point for NADP(+).

The protein belongs to the shikimate dehydrogenase family. Homodimer.

It carries out the reaction shikimate + NADP(+) = 3-dehydroshikimate + NADPH + H(+). It participates in metabolic intermediate biosynthesis; chorismate biosynthesis; chorismate from D-erythrose 4-phosphate and phosphoenolpyruvate: step 4/7. Involved in the biosynthesis of the chorismate, which leads to the biosynthesis of aromatic amino acids. Catalyzes the reversible NADPH linked reduction of 3-dehydroshikimate (DHSA) to yield shikimate (SA). The sequence is that of Shikimate dehydrogenase (NADP(+)) from Caldanaerobacter subterraneus subsp. tengcongensis (strain DSM 15242 / JCM 11007 / NBRC 100824 / MB4) (Thermoanaerobacter tengcongensis).